The primary structure comprises 265 residues: Mlc titration factor A (265 aa).

Histidine 111, histidine 148, histidine 152, and glutamate 211 together coordinate Zn(2+).

Belongs to the MtfA family. Interacts with Mlc. Zn(2+) is required as a cofactor.

It localises to the cytoplasm. Functionally, involved in the modulation of the activity of the glucose-phosphotransferase system (glucose-PTS). Interacts with the transcriptional repressor Mlc, preventing its interaction with DNA and leading to the modulation of expression of genes regulated by Mlc, including ptsG, which encodes the PTS system glucose-specific EIICB component. Its function is as follows. Shows zinc-dependent metallopeptidase activity. The chain is Mlc titration factor A from Cronobacter sakazakii (strain ATCC BAA-894) (Enterobacter sakazakii).